A 238-amino-acid chain; its full sequence is 7-cyano-7-deazaguanine synthase (238 aa).

Phe15 to Leu25 provides a ligand contact to ATP. Zn(2+)-binding residues include Cys203, Cys218, Cys221, and Cys224.

It belongs to the QueC family. The cofactor is Zn(2+).

The enzyme catalyses 7-carboxy-7-deazaguanine + NH4(+) + ATP = 7-cyano-7-deazaguanine + ADP + phosphate + H2O + H(+). It participates in purine metabolism; 7-cyano-7-deazaguanine biosynthesis. Functionally, catalyzes the ATP-dependent conversion of 7-carboxy-7-deazaguanine (CDG) to 7-cyano-7-deazaguanine (preQ(0)). This Alkalilimnicola ehrlichii (strain ATCC BAA-1101 / DSM 17681 / MLHE-1) protein is 7-cyano-7-deazaguanine synthase.